Consider the following 133-residue polypeptide: Complexin-1 (133 aa).

2 disordered regions span residues M1–A40 and A85–E112. Positions D15–A40 are enriched in basic and acidic residues. Residues P28–E60 are a coiled coil.

The protein belongs to the complexin/synaphin family. As to quaternary structure, binds to the SNARE core complex containing SNAP25, VAMP2 and syntaxin-1. In terms of tissue distribution, nervous system. Present in electric organ (at protein level).

The protein resides in the cytoplasm. Its subcellular location is the cytosol. Positively regulates a late step in synaptic vesicle exocytosis. This is Complexin-1 from Narke japonica (Japanese sleeper ray).